The chain runs to 594 residues: Chondroitin sulfate proteoglycan 5 (594 aa).

Positions 1 to 12 are enriched in polar residues; sequence MGVGGTSASDTA. The signal sequence occupies residues 1 to 18; that stretch reads MGVGGTSASDTALSLCPT. Disordered regions lie at residues 1-325 and 343-418; these read MGVG…PWGL and TTSF…SECR. Over 19–481 the chain is Extracellular; the sequence is APEWPPRNGS…AIVTDFQVLC (463 aa). Residues Asn26 and Asn44 are each glycosylated (N-linked (GlcNAc...) asparagine). Over residues 140–181 the composition is skewed to low complexity; that stretch reads SPGLGLSSPGPNLGLPSLDLPNPNLGLPDPNLGLPNPSLGLP. Composition is skewed to pro residues over residues 182–195 and 219–229; these read SPGP…PNPN and IPLPSPSPGPG. The segment covering 248–259 has biased composition (low complexity); the sequence is PQPSSSPAPAQR. Residues 298–310 are compositionally biased toward gly residues; sequence GGHGPGGGHGAGG. The tract at residues 338-377 is interaction with TNC and TNR; that stretch reads ADFYPTTSFYAEGDDDAEEELEEDEEEEEEEDGGLEDENG. Residues 349–375 are compositionally biased toward acidic residues; sequence EGDDDAEEELEEDEEEEEEEDGGLEDE. 2 N-linked (GlcNAc...) asparagine glycosylation sites follow: Asn413 and Asn425. Residues 429 to 471 form the EGF-like domain; that stretch reads RSVCDLVPSYCHNGGQCYLVESHGAFCRCNTQDYTWHKGTRCE. Cystine bridges form between Cys432/Cys445, Cys439/Cys455, and Cys457/Cys470. Residues 482–502 form a helical membrane-spanning segment; sequence VAVGSAALVLLLLFMLTVFFA. Residues 503 to 594 are Cytoplasmic-facing; it reads KKLYLLKTEN…GVPCLHNNLG (92 aa). A disordered region spans residues 535-594; the sequence is TIAEGSHPNDDPGAPHKLQDPLKPGLKDEEPLSILSTAPEEGSKGEPGGCGVPCLHNNLG. A compositionally biased stretch (basic and acidic residues) spans 541–564; sequence HPNDDPGAPHKLQDPLKPGLKDEE.

As to quaternary structure, binds TNC and TNR. The 80 kDa form but not the 140 kDa form can bind TNC and TNR when expressed at the cell surface. Different forms exist: the 140 kDa form (also reported as 130 kDa), which probably consists of the entire protein, and the 38 and 80 kDa forms, which are probably cleaved in their N-terminus. Increase in synaptic activity, results in shedding of the extracellular domain and expression at the cell surface of a 38 kDa form. A form of 200 kDa has also been reported, which is probably hyperglycosylated. In terms of processing, N-glycosylated. Post-translationally, O-glycosylated; contains chondroitin sulfate glycans. Part-time proteoglycan, the 200 kDa form is the only one containing chondroitin sulfate glycans. As to expression, expressed in astroglial and neuronal surfaces in different parts of the embryonic brain. Expressed in adult brain and retina (at protein level).

The protein localises to the cell membrane. Its function is as follows. May function as a growth and differentiation factor involved in neuritogenesis and more particularly in neurite extension. This is Chondroitin sulfate proteoglycan 5 (CSPG5) from Gallus gallus (Chicken).